We begin with the raw amino-acid sequence, 101 residues long: ATP-dependent Clp protease adapter protein ClpS (101 aa).

Residues 1-24 form a disordered region; that stretch reads MVVASAPAKPGSVGQQESASRDAT. The segment covering 13-23 has biased composition (polar residues); that stretch reads VGQQESASRDA.

It belongs to the ClpS family. As to quaternary structure, binds to the N-terminal domain of the chaperone ClpA.

Functionally, involved in the modulation of the specificity of the ClpAP-mediated ATP-dependent protein degradation. This chain is ATP-dependent Clp protease adapter protein ClpS, found in Mycobacterium marinum (strain ATCC BAA-535 / M).